The following is a 1502-amino-acid chain: Ras guanine nucleotide exchange factor P (1502 aa).

The region spanning 84 to 187 is the Calponin-homology (CH) domain; that stretch reads FIIDNQVLDW…LLYSLMKFSE (104 aa). 4 disordered regions span residues 216–242, 325–436, 456–534, and 589–935; these read AQSSSSSPTTSTSASTSTSTSPSSSNE, QQQQ…PNNN, EDNT…VGRG, and TTTA…NQNN. 4 stretches are compositionally biased toward low complexity: residues 218-242, 325-345, 371-400, and 407-421; these read SSSSSPTTSTSASTSTSTSPSSSNE, QQQQPPPQTSTCTTTQPTTTT, TTSSIIKKAAPAPLKKPSPANTSSNSLLNH, and SSSTASSAINTPIST. Positions 287–328 form a coiled coil; that stretch reads QQQQQQQQQQQQQQQQQQQQQQQQQQQQQQQQQQQQQQQQQQ. Residues 422 to 436 show a composition bias toward polar residues; sequence PSTSKSNSFQKPNNN. Residues 451 to 515 adopt a coiled-coil conformation; that stretch reads EENEIEDNTN…NQNENEDEVK (65 aa). The span at 458–508 shows a compositional bias: low complexity; the sequence is NTNNNNNNNNNNNNNNNNNNNNNNNNNNNNNNNNTNDNINNNNKNNNNNQN. Residues 518 to 528 are compositionally biased toward pro residues; the sequence is HSPPKVRPPLP. Low complexity-rich tracts occupy residues 589 to 646, 663 to 675, 686 to 719, 764 to 790, and 813 to 853; these read TTTA…NNNN, TISTSSPSTTGTI, SQPLNNNNNINNENNNSNNSNSLVTSSSPPLSLP, NSINQPPSNSSPKQSPVPNNPPSVSQS, and NSNS…NNNN. Positions 861–876 are enriched in polar residues; it reads LTMSNQSANSLKSSGN. Residues 883-935 are compositionally biased toward low complexity; it reads TNGNNNISQNQNQNQNQNQNQTQNQNQNQNQNHISHSNSISSGNLNNHVNQNN. A coiled-coil region spans residues 1032-1076; it reads VEENKNLITRTEEMQKMIDSLMKEKKELINEKNTLASMLAKTKQQ. One can recognise an N-terminal Ras-GEF domain in the interval 1102 to 1249; it reads GKYEIKGGTT…SELKLVFSTP (148 aa). Residues 1267 to 1498 enclose the Ras-GEF domain; it reads DPAEIARQLT…FNLSLICEPR (232 aa).

Promotes the exchange of Ras-bound GDP by GTP. This chain is Ras guanine nucleotide exchange factor P (gefP), found in Dictyostelium discoideum (Social amoeba).